The following is a 395-amino-acid chain: Fe(3+) ions import ATP-binding protein FbpC 2 (395 aa).

Positions 1-21 (MHIAQELADETCNSPRGAGHA) are disordered. Residues 23–264 (LRYPSDRRTA…PKTLFVADFI (242 aa)) form the ABC transporter domain. 66–73 (GPSGCGKT) contacts ATP.

It belongs to the ABC transporter superfamily. Fe(3+) ion importer (TC 3.A.1.10) family. In terms of assembly, the complex is composed of two ATP-binding proteins (FbpC), two transmembrane proteins (FbpB) and a solute-binding protein (FbpA).

It localises to the cell inner membrane. It carries out the reaction Fe(3+)(out) + ATP + H2O = Fe(3+)(in) + ADP + phosphate + H(+). Functionally, part of the ABC transporter complex FbpABC involved in Fe(3+) ions import. Responsible for energy coupling to the transport system. The sequence is that of Fe(3+) ions import ATP-binding protein FbpC 2 from Rhizobium meliloti (strain 1021) (Ensifer meliloti).